Consider the following 445-residue polypeptide: Damage suppressor protein (445 aa).

Composition is skewed to polar residues over residues 1 to 15 (MAST…SSTG) and 25 to 47 (SQGS…SATS). Disordered regions lie at residues 1 to 145 (MAST…HSVI) and 203 to 445 (YHSV…RKRK). Positions 61–73 (SSTTAGSSSTQGQ) are enriched in low complexity. The segment covering 74–87 (KFSTTPTDPKTFSS) has biased composition (polar residues). Over residues 88-97 (DQKEKSKSPA) the composition is skewed to basic and acidic residues. Residues 117-138 (DAKSSGQSQGQSKDSGKSSSDS) are compositionally biased toward low complexity. Basic and acidic residues predominate over residues 207–228 (VGDKTDDKKEGEHSGDKKDDSK). The interval 208 to 445 (GDKTDDKKEG…GGKAGGRKRK (238 aa)) is required and sufficient for DNA-binding and co-localization with nuclear DNA. Residues 245–256 (ETSGQAESSSGN) are compositionally biased toward polar residues. Residues 257–306 (EGAAPAKGRGRGRPPAAAKGVAKGAAKGAAASKGAKSGAESSKGGEQSSG) are compositionally biased toward low complexity. Residues 329-338 (GEGGASGSEG) show a composition bias toward gly residues. The required for nucleosome binding and for the protection of chromatin from hydroxyl radical-mediated DNA damage stretch occupies residues 360-445 (EPPRRSSRLT…GGKAGGRKRK (86 aa)). Residues 367–431 (RLTSSGTGAG…ASKAPQNGAG (65 aa)) are compositionally biased toward low complexity. Positions 432–445 (AKKKGGKAGGRKRK) are enriched in basic residues.

It is found in the nucleus. Unique chromatin-associating protein that contributes to the organism's exceptional tolerance to harsh environmental stresses. Binds with a higher affinity to nucleosomes than to free DNA. Protects chromatin from damage caused by hydroxyl radical-mediated cleavage induced by X-rays or treatment with hydrogen peroxide. Suppresses X-ray-induced DNA damage that includes single-strand breaks (SSBs) as well as more hazardous double-strand breaks (DSBs), and improves radiotolerance. Also shields DNA against reactive oxygen species (ROS). In Ramazzottius varieornatus (Water bear), this protein is Damage suppressor protein.